A 336-amino-acid chain; its full sequence is Probable allantoicase 2 (336 aa).

Belongs to the allantoicase family.

It carries out the reaction allantoate + H2O = (S)-ureidoglycolate + urea. It functions in the pathway nitrogen metabolism; (S)-allantoin degradation; (S)-ureidoglycolate from allantoate (aminidohydrolase route): step 1/1. This chain is Probable allantoicase 2, found in Burkholderia pseudomallei (strain K96243).